The primary structure comprises 339 residues: MAPQTNRKDLHLDAVLHHDMSMKKKTAGFESVEFEHCALPECDFNTIDLSTEFLGHRLALPFLISSMTGGARDAETINCRLAEAASELGIAMGVGSQRISLEESQHSGLGKTIRELAKGVPLYSNLGAAQLRDKGKLDNAQRAVEAIQADALFVHVNPMQEAFQKNGDHNWIGVLHAIEQLKPRVNVPIIIKEVGFGISGDVAQRLVDAGVDAIDVAGAGGTSWSAVEGYCQDNPHMQRAAELFRDWGIPTATCLAQIRAQHPKLPLIASGGIHNGLEAAKAIHLGANLVGQAGAVLKAATISTQLVVDHFEQMALELRLACFGTGSAKVNALTKARRL.

Position 7 to 8 (7 to 8) interacts with substrate; that stretch reads RK. FMN contacts are provided by residues Ser-65, 66-68, Ser-96, and Asn-125; that span reads SMT. 96-98 contributes to the substrate binding site; it reads SQR. Gln-160 contributes to the substrate binding site. Mg(2+) is bound at residue Glu-161. FMN is bound by residues Lys-192, Thr-222, and 293–294; that span reads AG.

The protein belongs to the IPP isomerase type 2 family. As to quaternary structure, homooctamer. Dimer of tetramers. FMN is required as a cofactor. It depends on NADPH as a cofactor. Requires Mg(2+) as cofactor.

Its subcellular location is the cytoplasm. It carries out the reaction isopentenyl diphosphate = dimethylallyl diphosphate. Its function is as follows. Involved in the biosynthesis of isoprenoids. Catalyzes the 1,3-allylic rearrangement of the homoallylic substrate isopentenyl (IPP) to its allylic isomer, dimethylallyl diphosphate (DMAPP). The protein is Isopentenyl-diphosphate delta-isomerase of Vibrio parahaemolyticus serotype O3:K6 (strain RIMD 2210633).